A 306-amino-acid chain; its full sequence is Curved DNA-binding protein (306 aa).

The J domain maps to 5–69 (DYYAIMGVKP…QRRAEYDQMW (65 aa)).

The protein resides in the cytoplasm. Its subcellular location is the nucleoid. In terms of biological role, DNA-binding protein that preferentially recognizes a curved DNA sequence. It is probably a functional analog of DnaJ; displays overlapping activities with DnaJ, but functions under different conditions, probably acting as a molecular chaperone in an adaptive response to environmental stresses other than heat shock. Lacks autonomous chaperone activity; binds native substrates and targets them for recognition by DnaK. Its activity is inhibited by the binding of CbpM. In Escherichia coli (strain K12 / MC4100 / BW2952), this protein is Curved DNA-binding protein.